A 327-amino-acid chain; its full sequence is Urease accessory protein 4 (327 aa).

N-linked (GlcNAc...) asparagine glycosylation occurs at Asn120. The helical transmembrane segment at 239 to 259 (VYATVLIIGPHLTTLFSYLAY) threads the bilayer.

This sequence belongs to the UreD family. URE4, URE6 and URE7 may form a complex that acts as a GTP-hydrolysis-dependent molecular chaperone, activating the urease apoprotein URE1.

It localises to the membrane. Urease accessory protein required for the maturation and activation of urease via the functional incorporation of the urease nickel metallocenter. Plays a role in host brain invasion. The polypeptide is Urease accessory protein 4 (Cryptococcus neoformans var. grubii serotype A (strain H99 / ATCC 208821 / CBS 10515 / FGSC 9487) (Filobasidiella neoformans var. grubii)).